Reading from the N-terminus, the 167-residue chain is uncharacterized protein (167 aa).

The segment at 148-167 (NKESRGENDGGEERESANIY) is disordered.

This is an uncharacterized protein from Homo sapiens (Human).